Here is a 643-residue protein sequence, read N- to C-terminus: Tigger transposable element-derived protein 5 (643 aa).

Residues 1-50 (MYSAGPPAVPAPRRCRRPPPGRPMQPPRPPAPAPVPAARPPPPAPGPRPR) form a disordered region. A compositionally biased stretch (pro residues) spans 20 to 48 (PGRPMQPPRPPAPAPVPAARPPPPAPGPR). The region spanning 52-103 (AVKMAFRKAYSIKDKLQAIERVKGGERQASVCRDFGVPGGTLRGWLKDEPKL) is the HTH psq-type domain. DNA-binding regions (H-T-H motif) lie at residues 79 to 99 (QASV…WLKD) and 150 to 183 (PLIQ…WQKR). The HTH CENPB-type domain maps to 117–190 (QRKKMRLANE…QKRHGISSQR (74 aa)). A disordered region spans residues 197 to 236 (PVAAGPAPGPPVKQEPAQPTRAGPLPDRAASTPAPAEGGY). A DDE-1 domain is found at 238-358 (DEQIYNANVT…LQQKAVLLVA (121 aa)). The interval 366–395 (EARMPALEESEETRRRCRPEPTGPPEELQT) is disordered.

The protein belongs to the tigger transposable element derived protein family.

Its subcellular location is the nucleus. The sequence is that of Tigger transposable element-derived protein 5 (TIGD5) from Bos taurus (Bovine).